The chain runs to 242 residues: 1-(5-phosphoribosyl)-5-[(5-phosphoribosylamino)methylideneamino] imidazole-4-carboxamide isomerase (242 aa).

Catalysis depends on aspartate 10, which acts as the Proton acceptor.

Belongs to the HisA/HisF family.

The protein resides in the cytoplasm. The enzyme catalyses 1-(5-phospho-beta-D-ribosyl)-5-[(5-phospho-beta-D-ribosylamino)methylideneamino]imidazole-4-carboxamide = 5-[(5-phospho-1-deoxy-D-ribulos-1-ylimino)methylamino]-1-(5-phospho-beta-D-ribosyl)imidazole-4-carboxamide. It participates in amino-acid biosynthesis; L-histidine biosynthesis; L-histidine from 5-phospho-alpha-D-ribose 1-diphosphate: step 4/9. This Corynebacterium diphtheriae (strain ATCC 700971 / NCTC 13129 / Biotype gravis) protein is 1-(5-phosphoribosyl)-5-[(5-phosphoribosylamino)methylideneamino] imidazole-4-carboxamide isomerase.